The primary structure comprises 449 residues: Phosphoglucosamine mutase (449 aa).

Serine 102 serves as the catalytic Phosphoserine intermediate. Residues serine 102, aspartate 243, aspartate 245, and aspartate 247 each coordinate Mg(2+). Serine 102 is modified (phosphoserine).

It belongs to the phosphohexose mutase family. Mg(2+) is required as a cofactor. In terms of processing, activated by phosphorylation.

The enzyme catalyses alpha-D-glucosamine 1-phosphate = D-glucosamine 6-phosphate. Catalyzes the conversion of glucosamine-6-phosphate to glucosamine-1-phosphate. The protein is Phosphoglucosamine mutase of Maricaulis maris (strain MCS10) (Caulobacter maris).